The chain runs to 3460 residues: Reelin (3460 aa).

Positions 1–25 (MERSGWARQTFLLALLLGATLRARA) are cleaved as a signal peptide. Residues 26–190 (AAGYYPRFSP…GAPTDVTVHP (165 aa)) enclose the Reelin domain. The cysteines at positions 40 and 126 are disulfide-linked. A glycan (N-linked (GlcNAc...) asparagine) is linked at asparagine 140. A disulfide bridge connects residues cysteine 154 and cysteine 178. N-linked (GlcNAc...) asparagine glycosylation is found at asparagine 257, asparagine 289, and asparagine 305. An intrachain disulfide couples cysteine 539 to cysteine 580. One copy of the BNR 1 repeat lies at 592–603 (EFSTNHGRSWSL). Cysteine 608 and cysteine 613 form a disulfide bridge. Asparagine 628 is a glycosylation site (N-linked (GlcNAc...) asparagine). The region spanning 670-701 (IGPSCLKFCSGRGQCTRHGCKCDPGFSGPACE) is the EGF-like 1 domain. 2 disulfides stabilise this stretch: cysteine 674-cysteine 684 and cysteine 691-cysteine 700. Residues 798 to 809 (HYSYDNGITWKL) form a BNR 2 repeat. A disulfide bridge connects residues cysteine 894 and cysteine 936. Residues 951 to 962 (EYSTNHGLTWHL) form a BNR 3 repeat. Disulfide bonds link cysteine 967–cysteine 974, cysteine 1033–cysteine 1043, and cysteine 1050–cysteine 1059. The EGF-like 2 domain maps to 1029–1060 (IGQQCPNMCSGHGSCDHGICRCDQGYQGTECH). One copy of the BNR 4 repeat lies at 1156–1167 (QYSNNGGIQWHL). The N-linked (GlcNAc...) asparagine glycan is linked to asparagine 1266. Cysteines 1270 and 1309 form a disulfide. A BNR 5 repeat occupies 1322 to 1333 (QYSHDAGMSWFL). Cysteines 1338 and 1347 form a disulfide. The EGF-like 3 domain occupies 1408 to 1441 (ISEPCPSYCSGHGDCISGVCFCDLGYTAAQGTCV). A BNR 6 repeat occupies 1534–1545 (QYSNDNGILWHL). Asparagine 1599 is a glycosylation site (N-linked (GlcNAc...) asparagine). An intrachain disulfide couples cysteine 1632 to cysteine 1672. The BNR 7 repeat unit spans residues 1685–1696 (QYSLNNGKDWHL). Cysteine 1701 and cysteine 1708 form a disulfide bridge. Asparagine 1749 is a glycosylation site (N-linked (GlcNAc...) asparagine). In terms of domain architecture, EGF-like 4 spans 1764 to 1795 (LASGCPWMCSGRGICDAGRCVCDRGFGGPYCV). One copy of the BNR 8 repeat lies at 1883-1894 (QFSISGGITWHL). The N-linked (GlcNAc...) asparagine glycan is linked to asparagine 1920. A BNR 9 repeat occupies 2042 to 2053 (EFSRDFGATWHL). Zn(2+)-binding residues include histidine 2060 and histidine 2073. The region spanning 2128 to 2160 (IGPQCEEMCNGQGSCINGTKCICDPGYSGPTCK) is the EGF-like 5 domain. 3 disulfide bridges follow: cysteine 2132/cysteine 2142, cysteine 2136/cysteine 2148, and cysteine 2150/cysteine 2159. Residue asparagine 2144 is glycosylated (N-linked (GlcNAc...) asparagine). Glutamate 2178 serves as a coordination point for Zn(2+). Cysteine 2194 and cysteine 2234 form a disulfide bridge. A BNR 10 repeat occupies 2249 to 2260 (QYSLNGGLSWSL). Position 2263 (glutamate 2263) interacts with Zn(2+). 2 N-linked (GlcNAc...) asparagine glycosylation sites follow: asparagine 2268 and asparagine 2316. 3 disulfides stabilise this stretch: cysteine 2347–cysteine 2386, cysteine 2392–cysteine 2558, and cysteine 2543–cysteine 2583. Glutamate 2396, glutamate 2398, and histidine 2459 together coordinate Zn(2+). The BNR 11 repeat unit spans residues 2398–2409 (EYSVDLGLSWHP). Residues 2477–2508 (IGDGCIDMCSGHGRCIQGNCVCDEQWGGLYCD) form the EGF-like 6 domain. Asparagine 2568 carries N-linked (GlcNAc...) asparagine glycosylation. BNR repeat units follow at residues 2597–2608 (EYSVNGGITWNL) and 2777–2788 (QYSTDFGVSWNY). 5 cysteine pairs are disulfide-bonded: cysteine 2793–cysteine 2800, cysteine 2856–cysteine 2866, cysteine 2860–cysteine 2871, cysteine 2873–cysteine 2882, and cysteine 2918–cysteine 2965. In terms of domain architecture, EGF-like 7 spans 2852-2883 (LGPGCLDNCRGHGDCLREQCICDPGYSGPNCY). N-linked (GlcNAc...) asparagine glycosylation occurs at asparagine 2961. The stretch at 2978 to 2989 (DYSTDGGITWTL) is one BNR 14 repeat. 2 N-linked (GlcNAc...) asparagine glycosylation sites follow: asparagine 3015 and asparagine 3072. The stretch at 3142–3154 (EYTKDARSDSWQL) is one BNR 15 repeat. Residues cysteine 3159 and cysteine 3169 are joined by a disulfide bond. Asparagine 3184 carries an N-linked (GlcNAc...) asparagine glycan. The EGF-like 8 domain maps to 3227-3259 (IGEACPKLCSGHGYCTTGAICICDESFQGDDCS). 4 disulfide bridges follow: cysteine 3231–cysteine 3241, cysteine 3235–cysteine 3247, cysteine 3249–cysteine 3258, and cysteine 3295–cysteine 3345. The BNR 16 repeat unit spans residues 3362–3373 (QYSVNNGITWHV). Residues asparagine 3411 and asparagine 3438 are each glycosylated (N-linked (GlcNAc...) asparagine).

The protein belongs to the reelin family. In terms of assembly, oligomer of disulfide-linked homodimers. N-glycosylated and to a lesser extent also O-glycosylated. As to expression, abundantly produced during brain ontogenesis by the Cajal-Retzius cells and other pioneer neurons located in the telencephalic marginal zone and by granule cells of the external granular layer of the cerebellum. In adult brain, preferentially expressed in GABAergic interneurons of prefrontal cortices, temporal cortex, hippocampus and glutamatergic granule cells of cerebellum. Expression is reduced to about 50% in patients with schizophrenia. Also expressed in fetal and adult liver.

The protein resides in the secreted. The protein localises to the extracellular space. Its subcellular location is the extracellular matrix. Extracellular matrix serine protease secreted by pioneer neurons that plays a role in layering of neurons in the cerebral cortex and cerebellum by coordinating cell positioning during neurodevelopment. Regulates microtubule function in neurons and neuronal migration. Binding to the extracellular domains of lipoprotein receptors VLDLR and LRP8/APOER2 induces tyrosine phosphorylation of DAB1 and modulation of TAU phosphorylation. Affects migration of sympathetic preganglionic neurons in the spinal cord, where it seems to act as a barrier to neuronal migration. Enzymatic activity is important for the modulation of cell adhesion. The chain is Reelin (RELN) from Homo sapiens (Human).